A 180-amino-acid chain; its full sequence is ATP synthase subunit delta (180 aa).

It belongs to the ATPase delta chain family. As to quaternary structure, F-type ATPases have 2 components, F(1) - the catalytic core - and F(0) - the membrane proton channel. F(1) has five subunits: alpha(3), beta(3), gamma(1), delta(1), epsilon(1). F(0) has three main subunits: a(1), b(2) and c(10-14). The alpha and beta chains form an alternating ring which encloses part of the gamma chain. F(1) is attached to F(0) by a central stalk formed by the gamma and epsilon chains, while a peripheral stalk is formed by the delta and b chains.

The protein localises to the cell inner membrane. In terms of biological role, f(1)F(0) ATP synthase produces ATP from ADP in the presence of a proton or sodium gradient. F-type ATPases consist of two structural domains, F(1) containing the extramembraneous catalytic core and F(0) containing the membrane proton channel, linked together by a central stalk and a peripheral stalk. During catalysis, ATP synthesis in the catalytic domain of F(1) is coupled via a rotary mechanism of the central stalk subunits to proton translocation. This protein is part of the stalk that links CF(0) to CF(1). It either transmits conformational changes from CF(0) to CF(1) or is implicated in proton conduction. The polypeptide is ATP synthase subunit delta (Citrifermentans bemidjiense (strain ATCC BAA-1014 / DSM 16622 / JCM 12645 / Bem) (Geobacter bemidjiensis)).